We begin with the raw amino-acid sequence, 479 residues long: Caspase-8 (479 aa).

Positions 1 to 216 (MDFSRNLYDI…TISDSPREQD (216 aa)) are excised as a propeptide. 2 consecutive DED domains span residues 2-80 (DFSR…TYLN) and 100-177 (AYRV…IIND). Phosphoserine occurs at positions 188 and 211. At lysine 224 the chain carries N6-acetyllysine. Histidine 317 is an active-site residue. Tyrosine 334 carries the phosphotyrosine modification. Cysteine 360 is an active-site residue. A propeptide spanning residues 375-384 (SEEQPYLEMD) is cleaved from the precursor. Phosphotyrosine; by SRC is present on tyrosine 380. Residue serine 387 is modified to Phosphoserine; by CDK1. A (Microbial infection) ADP-riboxanated arginine modification is found at arginine 413.

This sequence belongs to the peptidase C14A family. As to quaternary structure, heterotetramer that consists of two anti-parallel arranged heterodimers, each one formed by a 18 kDa (p18) and a 10 kDa (p10) subunit. Component of the death-induced signaling complex (DISC) composed of cell surface receptor FAS/CD95 or TNFRSF1A, adapter protein FADD and the CASP8 protease; recruitment of CASP8 to the complex is required for processing of CASP8 into the p18 and p10 subunits. Component of the AIM2 PANoptosome complex, a multiprotein complex that drives inflammatory cell death (PANoptosis). Interacts with CFLAR and PEA15. Interacts with TNFAIP8L2. Interacts with CASP8AP2. Interacts with RFFL and RNF34; negatively regulate CASP8 through proteasomal degradation. Interacts with NOL3; decreases CASP8 activity in a mitochondria localization- and phosphorylation-dependent manner and this interaction is dissociated by calcium. Interacts with UBR2ca. Interacts with RIPK1. Interacts with stimulated TNFRSF10B; this interaction is followed by CASP8 proteolytic cleavage and activation. Interacts (phosphorylated on Tyr-380) with PIK3R1. Interacts at the endoplasmic reticulum with a complex containing BCAP31, BAP29, BCL2 and/or BCL2L1. In terms of assembly, (Microbial infection) Interacts with human cytomegalovirus/HHV-5 protein vICA/UL36; this interaction inhibits CASP8 activation. As to quaternary structure, (Microbial infection) Interacts with NleF from pathogenic E.coli. (Microbial infection) Interacts with molluscum contagiosum virus protein MC160. In terms of assembly, (Microbial infection) Interacts (via RIP homotypic interaction motif) with herpes simplex virus 1/HHV-1 protein RIR1/ICP6 (via RIP homotypic interaction motif); this interaction prevents necroptosis activation. As to quaternary structure, (Microbial infection) Interacts (via RIP homotypic interaction motif) with herpes simplex virus 2/HHV-2 protein RIR1/ICP10 (via RIP homotypic interaction motif); this interaction prevents necroptosis activation. Generation of the p10 and p18 subunits requires association with the death-inducing signaling complex (DISC), whereas additional processing is likely due to the autocatalytic activity of the activated protease. GZMB and CASP10 can be involved in these processing events. In terms of processing, phosphorylation on Ser-387 during mitosis by CDK1 inhibits activation by proteolysis and prevents apoptosis. Phosphorylation on Tyr-380 by SRC is mediated by interaction with the SRC SH2 domain and does not affect dimerization or recruitment to the death-inducing signaling complex (DISC) but negatively regulates DISC-mediated processing and activation of CASP8, down-regulating its proapoptotic function. Phosphorylation on Tyr-380 also enhances localization to lamellipodia in migrating cells. Post-translationally, (Microbial infection) ADP-riboxanation by C.violaceum CopC blocks CASP8 processing, preventing CASP8 activation and ability to mediate extrinsic apoptosis. (Microbial infection) Proteolytically cleaved by the cowpox virus CRMA death inhibitory protein. Isoform 1, isoform 5 and isoform 7 are expressed in a wide variety of tissues. Highest expression in peripheral blood leukocytes, spleen, thymus and liver. Barely detectable in brain, testis and skeletal muscle.

It localises to the cytoplasm. Its subcellular location is the nucleus. It is found in the cell projection. The protein localises to the lamellipodium. The catalysed reaction is Strict requirement for Asp at position P1 and has a preferred cleavage sequence of (Leu/Asp/Val)-Glu-Thr-Asp-|-(Gly/Ser/Ala).. CASP8 activity is restricted by RIPK1. Inhibited by the effector protein NleF that is produced by pathogenic E.coli; this inhibits apoptosis. In terms of biological role, thiol protease that plays a key role in programmed cell death by acting as a molecular switch for apoptosis, necroptosis and pyroptosis, and is required to prevent tissue damage during embryonic development and adulthood. Initiator protease that induces extrinsic apoptosis by mediating cleavage and activation of effector caspases responsible for FAS/CD95-mediated and TNFRSF1A-induced cell death. Cleaves and activates effector caspases CASP3, CASP4, CASP6, CASP7, CASP9 and CASP10. Binding to the adapter molecule FADD recruits it to either receptor FAS/TNFRSF6 or TNFRSF1A. The resulting aggregate called the death-inducing signaling complex (DISC) performs CASP8 proteolytic activation. The active dimeric enzyme is then liberated from the DISC and free to activate downstream apoptotic proteases. Proteolytic fragments of the N-terminal propeptide (termed CAP3, CAP5 and CAP6) are likely retained in the DISC. In addition to extrinsic apoptosis, also acts as a negative regulator of necroptosis: acts by cleaving RIPK1 at 'Asp-324', which is crucial to inhibit RIPK1 kinase activity, limiting TNF-induced apoptosis, necroptosis and inflammatory response. Also able to initiate pyroptosis by mediating cleavage and activation of gasdermin-C and -D (GSDMC and GSDMD, respectively): gasdermin cleavage promotes release of the N-terminal moiety that binds to membranes and forms pores, triggering pyroptosis. Initiates pyroptosis following inactivation of MAP3K7/TAK1. Also acts as a regulator of innate immunity by mediating cleavage and inactivation of N4BP1 downstream of TLR3 or TLR4, thereby promoting cytokine production. May participate in the Granzyme B (GZMB) cell death pathways. Cleaves PARP1 and PARP2. Independent of its protease activity, promotes cell migration following phosphorylation at Tyr-380. Its function is as follows. Lacks the catalytic site and may interfere with the pro-apoptotic activity of the complex. Functionally, lacks the catalytic site and may interfere with the pro-apoptotic activity of the complex. Acts as an inhibitor of the caspase cascade. The protein is Caspase-8 of Homo sapiens (Human).